The primary structure comprises 169 residues: GTP-dependent dephospho-CoA kinase (169 aa).

Residues Asp45, Asp64, and Glu121 each coordinate GTP.

This sequence belongs to the GTP-dependent DPCK family.

It carries out the reaction 3'-dephospho-CoA + GTP = GDP + CoA + H(+). It functions in the pathway cofactor biosynthesis; coenzyme A biosynthesis. Its function is as follows. Catalyzes the GTP-dependent phosphorylation of the 3'-hydroxyl group of dephosphocoenzyme A to form coenzyme A (CoA). This chain is GTP-dependent dephospho-CoA kinase, found in Methanobrevibacter smithii (strain ATCC 35061 / DSM 861 / OCM 144 / PS).